Here is a 578-residue protein sequence, read N- to C-terminus: Nuclear receptor subfamily 1 group D member 2 (578 aa).

The tract at residues 1–60 (MELNAGGVIAYISSSSSASSPASCHSEGSENSFQSSSSSVPSSPNSSNCDANGNPKNTDV) is required for phosphorylation by CSNK1E and cytoplasmic localization. The interval 1–99 (MELNAGGVIA…HSGMTKFSGM (99 aa)) is modulating. Positions 13-47 (SSSSSASSPASCHSEGSENSFQSSSSSVPSSPNSS) are enriched in low complexity. The interval 13-89 (SSSSSASSPA…KPGAPGMTKS (77 aa)) is disordered. Phosphoserine; by GSK3-beta is present on Ser46. Polar residues predominate over residues 48–61 (NCDANGNPKNTDVS). Residues 100-176 (VLLCKVCGDV…VGMSRDAVRF (77 aa)) constitute a DNA-binding region (nuclear receptor). 2 NR C4-type zinc fingers span residues 103-123 (CKVCGDVASGFHYGVHACEGC) and 140-164 (CLKNENCSIMRMNRNRCQQCRFKKC). N6-acetyllysine; by KAT5 is present on residues Lys162 and Lys163. The tract at residues 214–247 (EPHEQSVPPAQEQLRPKPQLEQENIKSTPPPSDF) is disordered. Over residues 227 to 237 (LRPKPQLEQEN) the composition is skewed to basic and acidic residues. 2 disulfide bridges follow: Cys336/Cys342 and Cys373/Cys383. An NR LBD domain is found at 368-578 (RNSYLCSTGG…EELLAFKVHP (211 aa)). Cys383 and His567 together coordinate heme. Residues 396–578 (SGHEIWEEFS…EELLAFKVHP (183 aa)) are interaction with ZNHIT1.

It belongs to the nuclear hormone receptor family. NR1 subfamily. Binds DNA as a monomer or a homodimer. Interacts with NCOA5 coactivator, leading to a strong increase of transcription of target genes. Interacts (via N-terminus) with KAT5. Interacts (via C-terminus) with HDAC1. Interacts with ZNHIT1. Interacts with SIAH2. Deacetylated by HDAC1. Acetylation and deacetylation regulate its transcriptional regulatory activity. In terms of processing, under more reducing intracellular redox conditions, Cys-383 is in its heme-bound state, which is optimal for recruitment of the NCOR1/HDAC3 corepressor complex and repression of target genes. When subjected to oxidative stress conditions, Cys-383 undergoes oxidation to form a disulfide bridge with Cys-373, also triggering a ligand switch that results in release of bound heme and derepression of target genes. Post-translationally, ubiquitinated by SIAH2; leading to its proteasomal degradation. Phosphorylated by CSNK1E; phosphorylation enhances its cytoplasmic localization.

The protein localises to the nucleus. It is found in the cytoplasm. Its activity is regulated as follows. The heme-bound form can bind gaseous signaling molecules such as CO and nitric oxide (NO) and NO can reverse its transcriptional repressor activity. Transcriptional repressor which coordinates circadian rhythm and metabolic pathways in a heme-dependent manner. Integral component of the complex transcription machinery that governs circadian rhythmicity and forms a critical negative limb of the circadian clock by directly repressing the expression of core clock components BMAL1 and CLOCK. Also regulates genes involved in metabolic functions, including lipid metabolism and the inflammatory response. Acts as a receptor for heme which stimulates its interaction with the NCOR1/HDAC3 corepressor complex, enhancing transcriptional repression. Recognizes two classes of DNA response elements within the promoter of its target genes and can bind to DNA as either monomers or homodimers, depending on the nature of the response element. Binds as a monomer to a response element composed of the consensus half-site motif 5'-[A/G]GGTCA-3' preceded by an A/T-rich 5' sequence (RevRE), or as a homodimer to a direct repeat of the core motif spaced by two nuclegotides (RevDR-2). Acts as a potent competitive repressor of ROR alpha (RORA) function and also negatively regulates the expression of NR1D1. Regulates lipid and energy homeostasis in the skeletal muscle via repression of genes involved in lipid metabolism and myogenesis including: CD36, FABP3, FABP4, UCP3, SCD1 and MSTN. Regulates hepatic lipid metabolism via the repression of APOC3. Represses gene expression at a distance in macrophages by inhibiting the transcription of enhancer-derived RNAs (eRNAs). In addition to its activity as a repressor, can also act as a transcriptional activator. Acts as a transcriptional activator of the sterol regulatory element-binding protein 1 (SREBF1) and the inflammatory mediator interleukin-6 (IL6) in the skeletal muscle. Plays a role in the regulation of circadian sleep/wake cycle; essential for maintaining wakefulness during the dark phase or active period. Key regulator of skeletal muscle mitochondrial function; negatively regulates the skeletal muscle expression of core clock genes and genes involved in mitochondrial biogenesis, fatty acid beta-oxidation and lipid metabolism. May play a role in the circadian control of neutrophilic inflammation in the lung. This is Nuclear receptor subfamily 1 group D member 2 from Rattus norvegicus (Rat).